An 82-amino-acid chain; its full sequence is uncharacterized protein (82 aa).

Residues 1-11 (MKARGSRENAS) show a composition bias toward basic and acidic residues. The segment at 1 to 25 (MKARGSRENASKRRPSQTQYDTHLR) is disordered. The segment covering 16-25 (SQTQYDTHLR) has biased composition (polar residues).

This is an uncharacterized protein from Human cytomegalovirus (strain AD169) (HHV-5).